The primary structure comprises 288 residues: MGVRKLKPVTNGQRHAILYDYSELTRREPEKSLTYYYKRALGRSRQQGKITSRWKGAGNKIRYRLIDFKRDKSLIPAKVYSIEYDPFRSARIVLLHYKDGEKKYILWPDKLNVGDTVVSISYEDAIKGKELPDIKPGNAMPLRFIPVGTFIHNIELNPGRGAKLVRAAGLSAQVIGKIEGYAQVRLPSGEVRLINDKCMATIGVVGLAEHELVKLGKAGRSRWLGMRPNVRGTAMNPVDHPHGGGEGKTKGKHPESPWGWKTKGYKTKRGKRYSDRFIISKRNAGGKV.

The tract at residues 232–265 (GTAMNPVDHPHGGGEGKTKGKHPESPWGWKTKGY) is disordered. Residues 239 to 255 (DHPHGGGEGKTKGKHPE) are compositionally biased toward basic and acidic residues.

The protein belongs to the universal ribosomal protein uL2 family. In terms of assembly, part of the 50S ribosomal subunit. Forms a bridge to the 30S subunit in the 70S ribosome.

Functionally, one of the primary rRNA binding proteins. Required for association of the 30S and 50S subunits to form the 70S ribosome, for tRNA binding and peptide bond formation. It has been suggested to have peptidyltransferase activity; this is somewhat controversial. Makes several contacts with the 16S rRNA in the 70S ribosome. The sequence is that of Large ribosomal subunit protein uL2 from Hydrogenobaculum sp. (strain Y04AAS1).